The following is a 284-amino-acid chain: MTQIIDGKALAQKMQSQLAKKVEDLKQEFGIVPGLVVILVGDNPASQVYVRNKERSAIAAGFKSETIRLSESICQEELIKIIHRYNKDESIHGILVQLPLPTHINEKRIILEIDPHKDVDGFHPMNTGHLWSGRPIMVPCTPAGIMEMLSEYQIDLEGKHAVIIGRSNIVGKPMAQLLLDKNATVTLTHSRTRNLSKISSEADVLIVAIGQGHFVTEEYVKEGAVVIDVGMNRDDNGKLIGDVAFEEVSRKASYITPVPGGVGPMTITMLLEQTYQSALRRVSS.

Residues 165 to 167 (GRS) and serine 190 contribute to the NADP(+) site.

The protein belongs to the tetrahydrofolate dehydrogenase/cyclohydrolase family. As to quaternary structure, homodimer.

The catalysed reaction is (6R)-5,10-methylene-5,6,7,8-tetrahydrofolate + NADP(+) = (6R)-5,10-methenyltetrahydrofolate + NADPH. It carries out the reaction (6R)-5,10-methenyltetrahydrofolate + H2O = (6R)-10-formyltetrahydrofolate + H(+). The protein operates within one-carbon metabolism; tetrahydrofolate interconversion. Functionally, catalyzes the oxidation of 5,10-methylenetetrahydrofolate to 5,10-methenyltetrahydrofolate and then the hydrolysis of 5,10-methenyltetrahydrofolate to 10-formyltetrahydrofolate. In Streptococcus uberis (strain ATCC BAA-854 / 0140J), this protein is Bifunctional protein FolD.